A 145-amino-acid polypeptide reads, in one-letter code: Protein SprT-like (145 aa).

In terms of domain architecture, SprT-like spans 4–140 (TNYVQEVSLA…VCGNCHGKLI (137 aa)). Residue histidine 64 participates in Zn(2+) binding. Residue glutamate 65 is part of the active site. Residue histidine 68 coordinates Zn(2+).

Belongs to the SprT family. The cofactor is Zn(2+).

It is found in the cytoplasm. The sequence is that of Protein SprT-like from Streptococcus pyogenes serotype M18 (strain MGAS8232).